A 365-amino-acid chain; its full sequence is Heat-inducible transcription repressor HrcA (365 aa).

It belongs to the HrcA family.

In terms of biological role, negative regulator of class I heat shock genes (grpE-dnaK-dnaJ and groELS operons). Prevents heat-shock induction of these operons. This is Heat-inducible transcription repressor HrcA from Nodularia spumigena.